A 313-amino-acid chain; its full sequence is Fe-S cluster assembly protein DRE2 (313 aa).

Residues 1–184 (MTLRILLLLH…KKLLDRSNEV (184 aa)) are N-terminal SAM-like domain. Residues 134–144 (NITSNSNNNDS) are compositionally biased toward low complexity. Disordered regions lie at residues 134–155 (NITSNSNNNDSSPREVGVNNTG), 187–254 (NLAS…QEDN), and 271–313 (NLII…RQSG). The tract at residues 185-270 (KGNLASGTVK…NDLISELKSD (86 aa)) is linker. Residues 189–207 (ASGTVKSPSPGLTDTSAQN) are compositionally biased toward polar residues. The span at 233-254 (SDSDNNEGRDLDDDDDDGQEDN) shows a compositional bias: acidic residues.

This sequence belongs to the anamorsin family. In terms of assembly, monomer. Interacts with TAH18. Interacts with MIA40.

Its subcellular location is the cytoplasm. The protein resides in the mitochondrion intermembrane space. In terms of biological role, component of the cytosolic iron-sulfur (Fe-S) protein assembly (CIA) machinery required for the maturation of extramitochondrial Fe-S proteins. Part of an electron transfer chain functioning in an early step of cytosolic Fe-S biogenesis, facilitating the de novo assembly of a [4Fe-4S] cluster on the scaffold complex CFD1-NBP35. Electrons are transferred to DRE2 from NADPH via the FAD- and FMN-containing protein TAH18. TAH18-DRE2 are also required for the assembly of the diferric tyrosyl radical cofactor of ribonucleotide reductase (RNR), probably by providing electrons for reduction during radical cofactor maturation in the catalytic small subunit RNR2. The chain is Fe-S cluster assembly protein DRE2 (DRE2) from Lodderomyces elongisporus (strain ATCC 11503 / CBS 2605 / JCM 1781 / NBRC 1676 / NRRL YB-4239) (Yeast).